Consider the following 130-residue polypeptide: Organ-specific protein P4 (130 aa).

2 repeat units span residues 60-85 and 86-111. Positions 60 to 111 are 2 X 26 AA tandem repeats; sequence HAKENKGAIGEFEPCPNASAYGDNEIHANENKGAIGEFETRPNGSAYGDNEI. Residues 79–130 form a disordered region; sequence AYGDNEIHANENKGAIGEFETRPNGSAYGDNEIGAEFTDDFEPRPSMTKYNA.

This sequence to organ specific protein S2. As to expression, expressed in pods.

In Pisum sativum (Garden pea), this protein is Organ-specific protein P4.